A 1181-amino-acid polypeptide reads, in one-letter code: Pesticidal crystal protein Cry1Ae (1181 aa).

This sequence belongs to the delta endotoxin family.

In terms of biological role, promotes colloidosmotic lysis by binding to the midgut epithelial cells of many lepidopteran larvae. This is Pesticidal crystal protein Cry1Ae (cry1Ae) from Bacillus thuringiensis subsp. alesti.